The primary structure comprises 127 residues: Holo-[acyl-carrier-protein] synthase (127 aa).

2 residues coordinate Mg(2+): Asp-9 and Glu-58.

It belongs to the P-Pant transferase superfamily. AcpS family. Mg(2+) serves as cofactor.

It is found in the cytoplasm. It carries out the reaction apo-[ACP] + CoA = holo-[ACP] + adenosine 3',5'-bisphosphate + H(+). Its function is as follows. Transfers the 4'-phosphopantetheine moiety from coenzyme A to a Ser of acyl-carrier-protein. The chain is Holo-[acyl-carrier-protein] synthase from Shewanella sp. (strain W3-18-1).